The following is a 216-amino-acid chain: Adenylate kinase (216 aa).

11–16 (GSGKGT) contacts ATP. The interval 31 to 60 (ATGDLFRKAIERGDELGDTVKSYMERGELV) is NMP. Residues Thr32, Arg37, 58-60 (ELV), 86-89 (GFPR), and Gln93 contribute to the AMP site. The tract at residues 127-163 (GRWVCRSCQSPYQCGCAEVAEGKCSRCQGELYQRPDD) is LID. Residue Arg128 participates in ATP binding. Zn(2+) contacts are provided by Cys131, Cys134, Cys150, and Cys153. AMP contacts are provided by Arg160 and Arg171. Ala199 provides a ligand contact to ATP.

Belongs to the adenylate kinase family. As to quaternary structure, monomer.

It is found in the cytoplasm. It catalyses the reaction AMP + ATP = 2 ADP. It participates in purine metabolism; AMP biosynthesis via salvage pathway; AMP from ADP: step 1/1. Its function is as follows. Catalyzes the reversible transfer of the terminal phosphate group between ATP and AMP. Plays an important role in cellular energy homeostasis and in adenine nucleotide metabolism. The sequence is that of Adenylate kinase from Dehalococcoides mccartyi (strain ATCC BAA-2266 / KCTC 15142 / 195) (Dehalococcoides ethenogenes (strain 195)).